The following is a 563-amino-acid chain: Eukaryotic translation initiation factor 3 subunit D-1 (563 aa).

The interval 98-167 (VQKPPHQRGR…GPPPKMRESS (70 aa)) is disordered. The segment covering 100–121 (KPPHQRGRFRNMRNSRSGRGRN) has biased composition (basic residues). Position 128 is a phosphothreonine (T128). Residues 291–305 (EFDLLTVNESSVEPP) form an RNA gate region.

The protein belongs to the eIF-3 subunit D family. In terms of assembly, component of the eukaryotic translation initiation factor 3 (eIF-3) complex. The eIF-3 complex interacts with pix.

It is found in the cytoplasm. Functionally, mRNA cap-binding component of the eukaryotic translation initiation factor 3 (eIF-3) complex, which is involved in protein synthesis of a specialized repertoire of mRNAs and, together with other initiation factors, stimulates binding of mRNA and methionyl-tRNAi to the 40S ribosome. The eIF-3 complex specifically targets and initiates translation of a subset of mRNAs involved in cell proliferation. In the eIF-3 complex, eif3d specifically recognizes and binds the 7-methylguanosine cap of a subset of mRNAs. The chain is Eukaryotic translation initiation factor 3 subunit D-1 from Drosophila grimshawi (Hawaiian fruit fly).